The sequence spans 480 residues: Adenosylhomocysteinase (480 aa).

The substrate site is built by threonine 63, aspartate 142, and glutamate 203. 204 to 206 (TTT) is an NAD(+) binding site. 2 residues coordinate substrate: lysine 233 and aspartate 237. NAD(+) contacts are provided by residues asparagine 238, 267-272 (GYGDVG), glutamate 290, asparagine 325, 346-348 (IGH), and asparagine 394.

Belongs to the adenosylhomocysteinase family. It depends on NAD(+) as a cofactor.

The protein resides in the cytoplasm. The enzyme catalyses S-adenosyl-L-homocysteine + H2O = L-homocysteine + adenosine. It functions in the pathway amino-acid biosynthesis; L-homocysteine biosynthesis; L-homocysteine from S-adenosyl-L-homocysteine: step 1/1. Its function is as follows. May play a key role in the regulation of the intracellular concentration of adenosylhomocysteine. The polypeptide is Adenosylhomocysteinase (Xylella fastidiosa (strain Temecula1 / ATCC 700964)).